We begin with the raw amino-acid sequence, 371 residues long: 4-hydroxy-3-methylbut-2-en-1-yl diphosphate synthase (flavodoxin) (371 aa).

[4Fe-4S] cluster contacts are provided by cysteine 270, cysteine 273, cysteine 305, and glutamate 312.

This sequence belongs to the IspG family. It depends on [4Fe-4S] cluster as a cofactor.

It catalyses the reaction (2E)-4-hydroxy-3-methylbut-2-enyl diphosphate + oxidized [flavodoxin] + H2O + 2 H(+) = 2-C-methyl-D-erythritol 2,4-cyclic diphosphate + reduced [flavodoxin]. Its pathway is isoprenoid biosynthesis; isopentenyl diphosphate biosynthesis via DXP pathway; isopentenyl diphosphate from 1-deoxy-D-xylulose 5-phosphate: step 5/6. Its function is as follows. Converts 2C-methyl-D-erythritol 2,4-cyclodiphosphate (ME-2,4cPP) into 1-hydroxy-2-methyl-2-(E)-butenyl 4-diphosphate. The polypeptide is 4-hydroxy-3-methylbut-2-en-1-yl diphosphate synthase (flavodoxin) (Shewanella woodyi (strain ATCC 51908 / MS32)).